Reading from the N-terminus, the 140-residue chain is Transcriptional regulator YdaT (140 aa).

Transcriptional regulator that causes a severe detrimental growth effect and reduces cell viability. When expressed, it alters expression of a variety of bacterial regulons normally controlled by the transcriptional regulatory protein RcsA, resulting in deficient lipopolysaccharide biosynthesis and cell division. YdaT has no effect on Rac prophage excision. Overexpression of ydaST reduces growth and leads to loss of cell viability. May contribute to toxicity and morphological defects. The protein is Transcriptional regulator YdaT (ydaT) of Escherichia coli (strain K12).